A 578-amino-acid chain; its full sequence is E3 ubiquitin protein ligase RIN2 (578 aa).

Transmembrane regions (helical) follow at residues Leu-6–Leu-26, Phe-58–Leu-78, Leu-111–Cys-131, Val-161–Met-181, Ile-186–Leu-206, and Tyr-272–Leu-292. The RING-type; atypical zinc-finger motif lies at Cys-337–Arg-379. Residues Gln-504–Pro-513 show a composition bias toward polar residues. The segment at Gln-504–His-524 is disordered. The CUE domain occupies Asn-538–Met-578.

In terms of assembly, interacts (via C-terminus) with RPM1 (via N-terminus).

It localises to the membrane. It catalyses the reaction S-ubiquitinyl-[E2 ubiquitin-conjugating enzyme]-L-cysteine + [acceptor protein]-L-lysine = [E2 ubiquitin-conjugating enzyme]-L-cysteine + N(6)-ubiquitinyl-[acceptor protein]-L-lysine.. It participates in protein modification; protein ubiquitination. Its function is as follows. E3 ubiquitin protein ligase that acts as a positive regulator of RPM1- and RPS2-dependent hypersensitive response (HR), in association with RIN3. Probably not required for RPM1 degradation during HR. The protein is E3 ubiquitin protein ligase RIN2 (RIN2) of Arabidopsis thaliana (Mouse-ear cress).